A 139-amino-acid chain; its full sequence is Proline-rich protein 13 (139 aa).

The interval 1 to 139 is disordered; the sequence is MWNPSAGPNP…SSSSSSSDSD (139 aa). 2 stretches are compositionally biased toward pro residues: residues 24-62 and 70-91; these read ACPPSQNPAFPPGPCPPGIPQGNPAFPPCRPPYPVPQPG and GPYPPPYPPAAPGMCPVNPPAP. Residues 103-124 show a composition bias toward basic residues; the sequence is KTRKKMKKAHKKSHKHHKHGKH. The span at 125-139 shows a compositional bias: low complexity; it reads SSSSSSSSSSSSDSD.

Its subcellular location is the nucleus. Negatively regulates TSP1 expression at the level of transcription. This down-regulation was shown to reduce taxane-induced apoptosis. This chain is Proline-rich protein 13 (Prr13), found in Rattus norvegicus (Rat).